A 355-amino-acid polypeptide reads, in one-letter code: Ion-translocating oxidoreductase complex subunit D (355 aa).

4 helical membrane-spanning segments follow: residues 23–43 (WVAL…GWGT), 44–64 (LVQL…VMLF), 78–109 (ALVT…IVIA), and 129–149 (VVLL…LPLI). Thr194 is modified (FMN phosphoryl threonine). A run of 5 helical transmembrane segments spans residues 221–241 (FAGV…LILL), 250–270 (IPVG…LFFP), 273–293 (TASP…FFIA), 307–327 (ILFG…GGFP), and 328–348 (DGVA…DYYT).

The protein belongs to the NqrB/RnfD family. As to quaternary structure, the complex is composed of six subunits: RnfA, RnfB, RnfC, RnfD, RnfE and RnfG. Requires FMN as cofactor.

The protein resides in the cell inner membrane. Its function is as follows. Part of a membrane-bound complex that couples electron transfer with translocation of ions across the membrane. The polypeptide is Ion-translocating oxidoreductase complex subunit D (Vibrio vulnificus (strain CMCP6)).